Here is a 547-residue protein sequence, read N- to C-terminus: MAMASAACSCTDGTWWVYALPALLGSDTLCAHPALLAGLIFLATVSVALLAWATSPGGPAWTNGRGASASLLSWDPVVCPCSAASSRCPGAAAPRPRRDGPRRRPRAKELMAFSVGDTPAVVSSCPATAREVLAHPSFADRPVKRSARELMFARAIGFAPNGEYWRRLRRVASTHLFSPRRVASHEPGRQGDAEAMLRSIAAEQSASGAVALRPHLQAAALNNIMGSVFGTRYDVTSGAGAAEAEHLKSMVREGFELLGAFNWSDHLPWLAHLYDPSNVTRRCAALVPRVQTFVRGVIDEHRRRRQNSAALNDNADFVDVLLSLEGDEKLGDDDMVAILWEMVFRGTDTTALLTEWCMAELVRHPAVQARVRAEVDAAVGAGGCPTDADVARMPYLQAVVKETLRAHPPGPLLSWARLATADVPLCNGMVVPAGTTAMVNMWAITHDAAVWADPDAFAPERFLPSEGGADVDVRGVDLRLAPFGAGRRVCPGKNLGLTTVGLWVARLVHAFQWALPDGAAAVCLDEVLKLSLEMKTPLVAAAIPRTA.

A compositionally biased stretch (low complexity) spans Ala-84 to Pro-94. A disordered region spans residues Ala-84 to Arg-104. Heme is bound at residue Cys-490.

It belongs to the cytochrome P450 family. Requires heme as cofactor. As to expression, shoot apex.

This chain is Cytochrome P450 78A1 (CYP78A1), found in Zea mays (Maize).